The chain runs to 86 residues: Kappa-theraphotoxin-Cg1a 6 (86 aa).

An N-terminal signal peptide occupies residues 1–21 (MKVSVLITLAVLGVMFVWASA). A propeptide spanning residues 22–50 (AELEERGSDQRDSPAWLKSMERIFQSEER) is cleaved from the precursor. Disulfide bonds link C52–C66, C59–C71, and C65–C78. Position 84 is a phenylalanine amide (F84).

This sequence belongs to the neurotoxin 10 (Hwtx-1) family. 28 (Jztx-11) subfamily. Expressed by the venom gland.

The protein localises to the secreted. Functionally, this toxin acts as a voltage-dependent gating-modifier. It inhibits the sodium conductance (IC(50)=124 nM) and slows the fast inactivation (EC(50)=1180 nM) of Nav1.5/SCN5A. It significantly shifts the activation to more depolarized voltages and decreases the deactivation of Nav1.5 currents upon extreme depolarization, but only slightly affects voltage-dependence of steady-state inactivation. In addition, this toxin causes an approximately five-fold decrease in the rate of recovery from inactivation and an approximately 1.9-fold reduction in the closed-state inactivation rate. This toxin integrates the functions of site 3 toxins (alpha-scorpion toxins) with site 4 toxins (beta-scorpion and spider toxins) by targeting multiple sites on Nav1.5. Also shows inhibition of voltage-gated potassium channels (5 uM completely inhibits Kv2.1/KCNB1, whereas 5 uM moderately inhibits Kv4.2/KCND2 Kv4.1/KCND1 channels). The chain is Kappa-theraphotoxin-Cg1a 6 from Chilobrachys guangxiensis (Chinese earth tiger tarantula).